A 302-amino-acid polypeptide reads, in one-letter code: 4-hydroxy-tetrahydrodipicolinate synthase (302 aa).

Pyruvate is bound at residue T46. Y134 (proton donor/acceptor) is an active-site residue. K162 acts as the Schiff-base intermediate with substrate in catalysis. V204 is a pyruvate binding site.

It belongs to the DapA family. In terms of assembly, homotetramer; dimer of dimers.

The protein resides in the cytoplasm. It carries out the reaction L-aspartate 4-semialdehyde + pyruvate = (2S,4S)-4-hydroxy-2,3,4,5-tetrahydrodipicolinate + H2O + H(+). It participates in amino-acid biosynthesis; L-lysine biosynthesis via DAP pathway; (S)-tetrahydrodipicolinate from L-aspartate: step 3/4. Its function is as follows. Catalyzes the condensation of (S)-aspartate-beta-semialdehyde [(S)-ASA] and pyruvate to 4-hydroxy-tetrahydrodipicolinate (HTPA). The sequence is that of 4-hydroxy-tetrahydrodipicolinate synthase from Xanthomonas campestris pv. campestris (strain ATCC 33913 / DSM 3586 / NCPPB 528 / LMG 568 / P 25).